An 86-amino-acid chain; its full sequence is Small ribosomal subunit protein uS17 (86 aa).

Belongs to the universal ribosomal protein uS17 family. As to quaternary structure, part of the 30S ribosomal subunit.

One of the primary rRNA binding proteins, it binds specifically to the 5'-end of 16S ribosomal RNA. The protein is Small ribosomal subunit protein uS17 of Helicobacter acinonychis (strain Sheeba).